Reading from the N-terminus, the 107-residue chain is Phosphoribosyl-ATP pyrophosphatase (107 aa).

The protein belongs to the PRA-PH family.

The protein resides in the cytoplasm. The catalysed reaction is 1-(5-phospho-beta-D-ribosyl)-ATP + H2O = 1-(5-phospho-beta-D-ribosyl)-5'-AMP + diphosphate + H(+). Its pathway is amino-acid biosynthesis; L-histidine biosynthesis; L-histidine from 5-phospho-alpha-D-ribose 1-diphosphate: step 2/9. The polypeptide is Phosphoribosyl-ATP pyrophosphatase (hisE) (Agrobacterium fabrum (strain C58 / ATCC 33970) (Agrobacterium tumefaciens (strain C58))).